The primary structure comprises 714 residues: Fatty acid oxidation complex subunit alpha (714 aa).

An enoyl-CoA hydratase region spans residues 1–190; it reads MEMASAFTLN…KLGLVDDVVP (190 aa). The 3-hydroxyacyl-CoA dehydrogenase stretch occupies residues 306–714; it reads APLNSVGILG…FWKTTATDLQ (409 aa).

It in the N-terminal section; belongs to the enoyl-CoA hydratase/isomerase family. This sequence in the central section; belongs to the 3-hydroxyacyl-CoA dehydrogenase family. Heterotetramer of two alpha chains (FadJ) and two beta chains (FadI).

It localises to the cytoplasm. The catalysed reaction is a (3S)-3-hydroxyacyl-CoA = a (2E)-enoyl-CoA + H2O. It catalyses the reaction a 4-saturated-(3S)-3-hydroxyacyl-CoA = a (3E)-enoyl-CoA + H2O. The enzyme catalyses a (3S)-3-hydroxyacyl-CoA + NAD(+) = a 3-oxoacyl-CoA + NADH + H(+). It carries out the reaction (3S)-3-hydroxybutanoyl-CoA = (3R)-3-hydroxybutanoyl-CoA. The protein operates within lipid metabolism; fatty acid beta-oxidation. Its function is as follows. Catalyzes the formation of a hydroxyacyl-CoA by addition of water on enoyl-CoA. Also exhibits 3-hydroxyacyl-CoA epimerase and 3-hydroxyacyl-CoA dehydrogenase activities. The polypeptide is Fatty acid oxidation complex subunit alpha (Escherichia coli (strain UTI89 / UPEC)).